The following is a 179-amino-acid chain: Inosine/xanthosine triphosphatase (179 aa).

Position 71 (Glu71) interacts with Mg(2+). 71 to 72 (EA) serves as a coordination point for substrate.

This sequence belongs to the YjjX NTPase family. In terms of assembly, homodimer. Mg(2+) is required as a cofactor. The cofactor is Mn(2+).

It catalyses the reaction XTP + H2O = XDP + phosphate + H(+). The catalysed reaction is ITP + H2O = IDP + phosphate + H(+). Phosphatase that hydrolyzes non-canonical purine nucleotides such as XTP and ITP to their respective diphosphate derivatives. Probably excludes non-canonical purines from DNA/RNA precursor pool, thus preventing their incorporation into DNA/RNA and avoiding chromosomal lesions. The sequence is that of Inosine/xanthosine triphosphatase from Shewanella oneidensis (strain ATCC 700550 / JCM 31522 / CIP 106686 / LMG 19005 / NCIMB 14063 / MR-1).